We begin with the raw amino-acid sequence, 319 residues long: Ornithine carbamoyltransferase (319 aa).

Carbamoyl phosphate is bound by residues 55–58 (STRT), Gln82, Arg106, and 133–136 (HPCQ). Residues Asn171, Asp234, and 238–239 (SM) contribute to the L-ornithine site. Residues 274–275 (CL) and Arg302 each bind carbamoyl phosphate.

Belongs to the aspartate/ornithine carbamoyltransferase superfamily. OTCase family.

Its subcellular location is the cytoplasm. The catalysed reaction is carbamoyl phosphate + L-ornithine = L-citrulline + phosphate + H(+). The protein operates within amino-acid biosynthesis; L-arginine biosynthesis; L-arginine from L-ornithine and carbamoyl phosphate: step 1/3. In terms of biological role, reversibly catalyzes the transfer of the carbamoyl group from carbamoyl phosphate (CP) to the N(epsilon) atom of ornithine (ORN) to produce L-citrulline. This is Ornithine carbamoyltransferase (argF) from Corynebacterium glutamicum (strain ATCC 13032 / DSM 20300 / JCM 1318 / BCRC 11384 / CCUG 27702 / LMG 3730 / NBRC 12168 / NCIMB 10025 / NRRL B-2784 / 534).